The sequence spans 1087 residues: Transcription factor AP2-Z (1087 aa).

Positions 586 to 682 form a DNA-binding region, AP2; sequence GRVYKVIVRG…IKYNSVPDSL (97 aa).

This sequence belongs to the AP2/ERF transcription factor family. AP2 subfamily.

It localises to the nucleus. The protein resides in the chromosome. Its function is as follows. Transcription factor which binds the 5'-[TC][AC]TG[AT]AC[AG]-3' motif. During the mosquito vector stage, plays an essential role in the zygote for de novo transcription of genes required for ookinete formation. The polypeptide is Transcription factor AP2-Z (Plasmodium berghei (strain Anka)).